Reading from the N-terminus, the 164-residue chain is NADH-quinone oxidoreductase subunit I 2 (164 aa).

4Fe-4S ferredoxin-type domains are found at residues 39–71 (IVLT…VVKA) and 81–110 (ESFR…LTPD). 8 residues coordinate [4Fe-4S] cluster: cysteine 51, cysteine 54, cysteine 57, cysteine 61, cysteine 90, cysteine 93, cysteine 96, and cysteine 100.

This sequence belongs to the complex I 23 kDa subunit family. In terms of assembly, NDH-1 is composed of 14 different subunits. Subunits NuoA, H, J, K, L, M, N constitute the membrane sector of the complex. The cofactor is [4Fe-4S] cluster.

It localises to the cell inner membrane. The catalysed reaction is a quinone + NADH + 5 H(+)(in) = a quinol + NAD(+) + 4 H(+)(out). Its function is as follows. NDH-1 shuttles electrons from NADH, via FMN and iron-sulfur (Fe-S) centers, to quinones in the respiratory chain. The immediate electron acceptor for the enzyme in this species is believed to be ubiquinone. Couples the redox reaction to proton translocation (for every two electrons transferred, four hydrogen ions are translocated across the cytoplasmic membrane), and thus conserves the redox energy in a proton gradient. This is NADH-quinone oxidoreductase subunit I 2 from Cereibacter sphaeroides (strain ATCC 17023 / DSM 158 / JCM 6121 / CCUG 31486 / LMG 2827 / NBRC 12203 / NCIMB 8253 / ATH 2.4.1.) (Rhodobacter sphaeroides).